An 889-amino-acid chain; its full sequence is DNA mismatch repair protein MutS (889 aa).

An ATP-binding site is contributed by 641 to 648; sequence GPNMAGKS.

Belongs to the DNA mismatch repair MutS family.

This protein is involved in the repair of mismatches in DNA. It is possible that it carries out the mismatch recognition step. This protein has a weak ATPase activity. This Orientia tsutsugamushi (strain Ikeda) (Rickettsia tsutsugamushi) protein is DNA mismatch repair protein MutS.